The sequence spans 689 residues: Glycine--tRNA ligase beta subunit (689 aa).

It belongs to the class-II aminoacyl-tRNA synthetase family. In terms of assembly, tetramer of two alpha and two beta subunits.

It is found in the cytoplasm. The catalysed reaction is tRNA(Gly) + glycine + ATP = glycyl-tRNA(Gly) + AMP + diphosphate. This Shewanella sp. (strain W3-18-1) protein is Glycine--tRNA ligase beta subunit.